The primary structure comprises 314 residues: O-antigen chain rhamnosyltransferase RfbN (314 aa).

Belongs to the glycosyltransferase 2 family.

The enzyme catalyses alpha-D-galactosyl-di-trans,octa-cis-undecaprenyl diphosphate + dTDP-beta-L-rhamnose = alpha-L-rhamnosyl-(1-&gt;3)-alpha-D-galactosyl-1-diphospho-di-trans,octa-cis-undecaprenol + dTDP + H(+). The protein operates within bacterial outer membrane biogenesis; LPS O-antigen biosynthesis. Functionally, rhamnosyltransferase involved in the biosynthesis of the repeat unit of the lipopolysaccharide (LPS) O-antigen region. Catalyzes the addition of a rhamnose to the galactosyl-undecaprenyl diphosphate intermediate. The chain is O-antigen chain rhamnosyltransferase RfbN from Salmonella typhimurium (strain LT2 / SGSC1412 / ATCC 700720).